Reading from the N-terminus, the 287-residue chain is 4-hydroxybenzoate octaprenyltransferase (287 aa).

Helical transmembrane passes span 21-39 (PIGTLLLLWPTLWALWLAA), 95-115 (VLALFAVLALISFALVLTMNP), 116-136 (LTIGLSFAALLLAVCYPFMKR), 138-158 (IPIPQLVLGMAFSWSIPMAYA), 161-181 (ANALPAVAWLVFLANLLWTIA), 213-233 (IIGALQLLTLLILLLVGQLSE), 234-251 (LGSSYYWSLLAAAALFVY), and 264-284 (CFQAFLNNNYVGALIFAGVVI).

It belongs to the UbiA prenyltransferase family. Mg(2+) serves as cofactor.

The protein resides in the cell inner membrane. The enzyme catalyses all-trans-octaprenyl diphosphate + 4-hydroxybenzoate = 4-hydroxy-3-(all-trans-octaprenyl)benzoate + diphosphate. It participates in cofactor biosynthesis; ubiquinone biosynthesis. Functionally, catalyzes the prenylation of para-hydroxybenzoate (PHB) with an all-trans polyprenyl group. Mediates the second step in the final reaction sequence of ubiquinone-8 (UQ-8) biosynthesis, which is the condensation of the polyisoprenoid side chain with PHB, generating the first membrane-bound Q intermediate 3-octaprenyl-4-hydroxybenzoate. The chain is 4-hydroxybenzoate octaprenyltransferase from Aeromonas hydrophila subsp. hydrophila (strain ATCC 7966 / DSM 30187 / BCRC 13018 / CCUG 14551 / JCM 1027 / KCTC 2358 / NCIMB 9240 / NCTC 8049).